Here is a 918-residue protein sequence, read N- to C-terminus: Isoleucine--tRNA ligase (918 aa).

Positions 59-69 match the 'HIGH' region motif; the sequence is PYANGHLHIGH. An L-isoleucyl-5'-AMP-binding site is contributed by Glu-570. The 'KMSKS' region signature appears at 611-615; it reads KMSKS. An ATP-binding site is contributed by Lys-614. Residues Cys-893, Cys-896, Cys-908, and Cys-911 each contribute to the Zn(2+) site.

This sequence belongs to the class-I aminoacyl-tRNA synthetase family. IleS type 1 subfamily. As to quaternary structure, monomer. It depends on Zn(2+) as a cofactor.

It is found in the cytoplasm. It carries out the reaction tRNA(Ile) + L-isoleucine + ATP = L-isoleucyl-tRNA(Ile) + AMP + diphosphate. In terms of biological role, catalyzes the attachment of isoleucine to tRNA(Ile). As IleRS can inadvertently accommodate and process structurally similar amino acids such as valine, to avoid such errors it has two additional distinct tRNA(Ile)-dependent editing activities. One activity is designated as 'pretransfer' editing and involves the hydrolysis of activated Val-AMP. The other activity is designated 'posttransfer' editing and involves deacylation of mischarged Val-tRNA(Ile). This is Isoleucine--tRNA ligase from Campylobacter concisus (strain 13826).